The following is a 130-amino-acid chain: Cytochrome c-type biogenesis protein CcmE (130 aa).

Topologically, residues 1–7 are cytoplasmic; the sequence is MKKKHKR. Residues 8 to 28 traverse the membrane as a helical; Signal-anchor for type II membrane protein segment; that stretch reads LLITSGIFCFLSCAVFFILTT. Topologically, residues 29–130 are extracellular; that stretch reads LKENISFFYT…DENYMPKVLK (102 aa). Heme contacts are provided by H120 and Y124.

The protein belongs to the CcmE/CycJ family.

It localises to the cell membrane. Functionally, heme chaperone required for the biogenesis of c-type cytochromes. Transiently binds heme delivered by CcmC and transfers the heme to apo-cytochromes in a process facilitated by CcmF and CcmH. The chain is Cytochrome c-type biogenesis protein CcmE from Wolbachia pipientis wMel.